Reading from the N-terminus, the 296-residue chain is MSVTGGSKDEILHKPVLLSEALKFLAPKNGGVYVDATFGAGGYTRAILSSVDCFVYAIDRDETVRRFFQVIENDFPKRTNFINGNFVDIGSLLGEVKVDGIVFDLGVSTMQLKVADRGFSFLHEGPLDMRMDRSTLLTAETVVNSYTEVKIASIIYQFGEERMSRKIAHAIVNARRKKRITTTSSLAEIVRSCFPKRYYKIDPATKTFQALRIFINDELGALECGLRTALTMLKVGSRAVVVSFHSLEDRIVKHLFRSVHGNGFNLLTKKIVVPSRDEVRENPSSRSARMRVIEKV.

Residues 41-43, D59, F86, D104, and Q111 each bind S-adenosyl-L-methionine; that span reads GGY.

This sequence belongs to the methyltransferase superfamily. RsmH family.

It localises to the cytoplasm. It catalyses the reaction cytidine(1402) in 16S rRNA + S-adenosyl-L-methionine = N(4)-methylcytidine(1402) in 16S rRNA + S-adenosyl-L-homocysteine + H(+). Functionally, specifically methylates the N4 position of cytidine in position 1402 (C1402) of 16S rRNA. In Neorickettsia sennetsu (strain ATCC VR-367 / Miyayama) (Ehrlichia sennetsu), this protein is Ribosomal RNA small subunit methyltransferase H.